The chain runs to 492 residues: Probable proline dehydrogenase, mitochondrial (492 aa).

This sequence belongs to the proline oxidase family. It depends on FAD as a cofactor.

The protein localises to the mitochondrion. The enzyme catalyses L-proline + a quinone = (S)-1-pyrroline-5-carboxylate + a quinol + H(+). In terms of biological role, converts proline to delta-1-pyrroline-5-carboxylate. This Schizosaccharomyces pombe (strain 972 / ATCC 24843) (Fission yeast) protein is Probable proline dehydrogenase, mitochondrial.